Consider the following 322-residue polypeptide: Mitochondrial glutamate carrier 1 (322 aa).

Solcar repeat units lie at residues 6 to 93 (ISLP…FRYQ), 101 to 214 (LTLF…LNEL), and 223 to 312 (SPFY…GIAE). The next 6 helical transmembrane spans lie at 12-32 (LINGGIAGLIGVTCVFPIDLA), 62-82 (YFGMYRGAAVNLTLVTPEKAI), 107-127 (MLAGCGAGTCQVIVTTPMEML), 189-209 (GLGATLLRDVPFSIVYFPLFA), 223-243 (SPFYVSFLAGCVAGSAAAVAV), and 292-312 (ALVIAPLFGIAQVVYFLGIAE).

This sequence belongs to the mitochondrial carrier (TC 2.A.29) family.

Its subcellular location is the mitochondrion inner membrane. It carries out the reaction L-glutamate(in) + H(+)(in) = L-glutamate(out) + H(+)(out). In terms of biological role, mitochondrial glutamate/H(+) symporter. Responsible for the transport of glutamate from the cytosol into the mitochondrial matrix with the concomitant import of a proton. Plays a role in the control of glucose-stimulated insulin secretion. This is Mitochondrial glutamate carrier 1 (SLC25A22) from Bos taurus (Bovine).